The chain runs to 337 residues: Centromere protein N (337 aa).

Ser226 and Ser233 each carry phosphoserine.

It belongs to the CENP-N/CHL4 family. Component of the CENPA-NAC complex, at least composed of CENPA, CENPC, CENPH, CENPM, CENPN, CENPT and CENPU. The CENPA-NAC complex interacts with the CENPA-CAD complex, composed of CENPI, CENPK, CENPL, CENPO, CENPP, CENPQ, CENPR and CENPS. Interacts directly with CENPA. Identified in a centromere complex containing histones H2A, H2B and H4, and at least CENPA, CENPB, CENPC, CENPT, CENPN, HJURP, SUPT16H, SSRP1 and RSF1.

It is found in the nucleus. Its subcellular location is the chromosome. The protein resides in the centromere. The protein localises to the kinetochore. Its function is as follows. Component of the CENPA-NAC (nucleosome-associated) complex, a complex that plays a central role in assembly of kinetochore proteins, mitotic progression and chromosome segregation. The CENPA-NAC complex recruits the CENPA-CAD (nucleosome distal) complex and may be involved in incorporation of newly synthesized CENPA into centromeres. CENPN is the first protein to bind specifically to CENPA nucleosomes and the direct binding of CENPA nucleosomes by CENPN is required for centromere assembly. Required for chromosome congression and efficiently align the chromosomes on a metaphase plate. The sequence is that of Centromere protein N (Cenpn) from Mus musculus (Mouse).